We begin with the raw amino-acid sequence, 460 residues long: Argininosuccinate lyase (460 aa).

Belongs to the lyase 1 family. Argininosuccinate lyase subfamily.

It is found in the cytoplasm. It carries out the reaction 2-(N(omega)-L-arginino)succinate = fumarate + L-arginine. Its pathway is amino-acid biosynthesis; L-arginine biosynthesis; L-arginine from L-ornithine and carbamoyl phosphate: step 3/3. The protein is Argininosuccinate lyase of Alteromonas mediterranea (strain DSM 17117 / CIP 110805 / LMG 28347 / Deep ecotype).